The chain runs to 282 residues: Protein GAM-1 (282 aa).

Positions 251–260 (SLQDWARLGV) match the BC-box-like motif.

As to quaternary structure, interacts with host HDAC1. Interacts with host E1-activating enzyme (SAE1/UBA2 heterodimer). Interacts with host retinoblastoma protein. Seems to form a complex with host E4F1 and HDAC1. Seems to form complexes with either CUL2-elongin BC complex-RBX1 or CUL5-elongin BC complex-RBX1. Interacts with TCEB1/Elongin-C, CUL2 and CUL5 in vitro.

The protein resides in the host nucleus. Functionally, early protein essential for viral replication. Strong and global transcriptional activator of both viral and cellular genes. Activates transcription by blocking host retinoblastoma protein (RB) and inhibiting the SUMO pathway. Inhibition of host RB leads to the activation of E2F1-dependent transcription and, in particular, of E2F1-regulated S-phase genes. Stimulation of progression from G1 to S phase allows the virus to efficiently use the cellular DNA replicating machinery to achieve viral genome replication. Blocks the SUMO pathway by targeting the E1 enzyme (SAE1/UBA2 heterodimer) to the ubiquitin-proteasome machinery. Mediates SAE1 degradation possibly through the formation of complexes with either CUL2-elongin BC complex-RBX1 or CUL5-elongin BC complex-RBX1. The degradation of UBA2 is probably a consequent effect of SAE1 disappearance. Inhibits HDAC1 sumoylation, thereby interfering with histone deacetylation mediated by HDAC1, leading to activation of transcription. Mediates induction of heat-shock response. Seems to have an antiapoptotic function. This Galliformes (FAdV-1) protein is Protein GAM-1.